Reading from the N-terminus, the 250-residue chain is NADH-quinone oxidoreductase subunit C (250 aa).

Belongs to the complex I 30 kDa subunit family. NDH-1 is composed of 14 different subunits. Subunits NuoB, C, D, E, F, and G constitute the peripheral sector of the complex.

Its subcellular location is the cell inner membrane. The enzyme catalyses a quinone + NADH + 5 H(+)(in) = a quinol + NAD(+) + 4 H(+)(out). In terms of biological role, NDH-1 shuttles electrons from NADH, via FMN and iron-sulfur (Fe-S) centers, to quinones in the respiratory chain. The immediate electron acceptor for the enzyme in this species is believed to be ubiquinone. Couples the redox reaction to proton translocation (for every two electrons transferred, four hydrogen ions are translocated across the cytoplasmic membrane), and thus conserves the redox energy in a proton gradient. The chain is NADH-quinone oxidoreductase subunit C from Xylella fastidiosa (strain M23).